The primary structure comprises 306 residues: Agmatinase (306 aa).

Histidine 128, aspartate 151, histidine 153, aspartate 155, aspartate 232, and aspartate 234 together coordinate Mn(2+).

This sequence belongs to the arginase family. Agmatinase subfamily. Mn(2+) is required as a cofactor.

It catalyses the reaction agmatine + H2O = urea + putrescine. Its pathway is amine and polyamine biosynthesis; putrescine biosynthesis via agmatine pathway; putrescine from agmatine: step 1/1. Its function is as follows. Catalyzes the formation of putrescine from agmatine. The polypeptide is Agmatinase (speB) (Proteus mirabilis).